Here is a 1132-residue protein sequence, read N- to C-terminus: Error-prone DNA polymerase (1132 aa).

This sequence belongs to the DNA polymerase type-C family. DnaE2 subfamily.

The protein localises to the cytoplasm. The enzyme catalyses DNA(n) + a 2'-deoxyribonucleoside 5'-triphosphate = DNA(n+1) + diphosphate. Its function is as follows. DNA polymerase involved in damage-induced mutagenesis and translesion synthesis (TLS). It is not the major replicative DNA polymerase. The chain is Error-prone DNA polymerase from Anaeromyxobacter dehalogenans (strain 2CP-C).